The chain runs to 405 residues: Argininosuccinate synthase (405 aa).

Residues 10 to 18 and Ala-37 each bind ATP; that span reads AYSGGLDTS. 2 residues coordinate L-citrulline: Tyr-88 and Ser-93. Position 118 (Gly-118) interacts with ATP. The L-aspartate site is built by Thr-120, Asn-124, and Asp-125. Residue Asn-124 coordinates L-citrulline. L-citrulline-binding residues include Arg-128, Ser-179, Ser-188, Glu-264, and Tyr-276.

It belongs to the argininosuccinate synthase family. Type 1 subfamily. As to quaternary structure, homotetramer.

It localises to the cytoplasm. It catalyses the reaction L-citrulline + L-aspartate + ATP = 2-(N(omega)-L-arginino)succinate + AMP + diphosphate + H(+). The protein operates within amino-acid biosynthesis; L-arginine biosynthesis; L-arginine from L-ornithine and carbamoyl phosphate: step 2/3. The polypeptide is Argininosuccinate synthase (Pseudomonas aeruginosa (strain LESB58)).